A 269-amino-acid chain; its full sequence is Protein TIFY 11B (269 aa).

The region spanning Pro100 to Glu135 is the Tify domain. The disordered stretch occupies residues Pro160 to Gln181. The span at Glu164–Gln181 shows a compositional bias: polar residues. The Jas motif lies at Ile186–Gln210. The Nuclear localization signal motif lies at Ala187 to Arg194. Residues Tyr209–Leu269 form a disordered region. The span at Met250–Leu269 shows a compositional bias: basic and acidic residues.

The protein belongs to the TIFY/JAZ family. In terms of assembly, homo- and heterodimer. Interacts with MYC2, AFPH2/NINJA, TIFY10A/JAZ1, TIFY10B/JAZ2, TIFY11A/JAZ5, TIFY5A/JAZ8, TIFY9/JAZ10 and TIFY3B/JAZ12. (Microbial infection) Interacts with the pathogenic Pseudomonas syringae HopZ1a protein. Post-translationally, (Microbial infection) Acetylated by Pseudomonas syringae HopZ1a. Ubiquitinated. Targeted for degradation by the SCF(COI1) E3 ubiquitin ligase-proteasome pathway during jasmonate signaling.

It is found in the nucleus. The protein resides in the cell membrane. Repressor of jasmonate responses. The polypeptide is Protein TIFY 11B (Arabidopsis thaliana (Mouse-ear cress)).